The chain runs to 881 residues: Valine--tRNA ligase (881 aa).

A 'HIGH' region motif is present at residues 42 to 52 (PNITGDLHVGH). The 'KMSKS' region signature appears at 554–558 (KMSKS). ATP is bound at residue K557.

This sequence belongs to the class-I aminoacyl-tRNA synthetase family. ValS type 1 subfamily. In terms of assembly, monomer.

It localises to the cytoplasm. It catalyses the reaction tRNA(Val) + L-valine + ATP = L-valyl-tRNA(Val) + AMP + diphosphate. In terms of biological role, catalyzes the attachment of valine to tRNA(Val). As ValRS can inadvertently accommodate and process structurally similar amino acids such as threonine, to avoid such errors, it has a 'posttransfer' editing activity that hydrolyzes mischarged Thr-tRNA(Val) in a tRNA-dependent manner. This is Valine--tRNA ligase from Wigglesworthia glossinidia brevipalpis.